Consider the following 261-residue polypeptide: Methyl-coenzyme M reductase subunit gamma (261 aa).

A coenzyme M-binding site is contributed by arginine 123.

Belongs to the methyl-coenzyme M reductase gamma subunit family. As to quaternary structure, MCR is a hexamer of two alpha, two beta, and two gamma chains, forming a dimer of heterotrimers. Coenzyme F430 serves as cofactor.

It localises to the cytoplasm. The catalysed reaction is coenzyme B + methyl-coenzyme M = methane + coenzyme M-coenzyme B heterodisulfide. Its pathway is one-carbon metabolism; methyl-coenzyme M reduction; methane from methyl-coenzyme M: step 1/1. In terms of biological role, component of the methyl-coenzyme M reductase (MCR) I that catalyzes the reductive cleavage of methyl-coenzyme M (CoM-S-CH3 or 2-(methylthio)ethanesulfonate) using coenzyme B (CoB or 7-mercaptoheptanoylthreonine phosphate) as reductant which results in the production of methane and the mixed heterodisulfide of CoB and CoM (CoM-S-S-CoB). This is the final step in methanogenesis. The polypeptide is Methyl-coenzyme M reductase subunit gamma (mcrG) (Methanococcus voltae).